The following is a 198-amino-acid chain: Snake venom metalloproteinase neuwiedase (198 aa).

One can recognise a Peptidase M12B domain in the interval 8–198 (RYIELVIVAD…QTFLTNHNPQ (191 aa)). Glutamate 11 and aspartate 95 together coordinate Ca(2+). Histidine 144 is a Zn(2+) binding site. Glutamate 145 is an active-site residue. Zn(2+) is bound by residues histidine 148 and histidine 154. 2 disulfides stabilise this stretch: cysteine 159–cysteine 183 and cysteine 161–cysteine 166.

This sequence belongs to the venom metalloproteinase (M12B) family. P-I subfamily. Zn(2+) serves as cofactor. In terms of tissue distribution, expressed by the venom gland.

Its subcellular location is the secreted. Its activity is regulated as follows. Inhibited by EDTA, EGTA and 1,10-phenanthroline, partially inhibited by beta-mercaptoethanol and not inhibited by serine protease inhibitors (leupeptin and aprotinin). Also inhibited by an excess of zinc, mercury and magnesium ions. Extracts of the plant Casearia mariquitensis neutralizes the decrease of platelets and plasma fibrinogen induced by the protease. The same extracts also partially inhibit Bbeta chain cleavage, but not Aalpha chain cleavage. Functionally, this metalloprotease hydrolyzes the Aalpha chain of fibrin and fibrinogen first followed by the Bbeta chain and shows no effect on the gamma chain. It is also able to degrade type I collagen, fibronectin, laminin and induces inflammatory reaction. It is devoid of hemorrhagic and thrombotic activities, except in lung where it induces pulmonary bleeding. It also induces a mild myotoxic reaction. It is not able to inhibit platelet aggregation, but it induces decrease of platelets and plasma fibrinogen. It contributes to local tissue damage by inducing edema, inflammatory infiltrate and mild myotoxicity, and by degrading extracellular matrix components. The polypeptide is Snake venom metalloproteinase neuwiedase (Bothrops pauloensis (Neuwied's lancehead)).